A 453-amino-acid polypeptide reads, in one-letter code: MERTCLAIILAAGDSTRMKSSISKVLHPIAGRPMIAHVMEAIARTDISAAALVVGRNAEEVAAAADIGGIEVEAYLQKERLGTGHAVLAAREAIARGYDDIIVAYGDVPLLTDVPLRAARKGLADGNDIVVIGFHTENPNAYGRLLVKDGELIAIREAKDATDAELAVTWCNSGLMAINGRKALDLLDRIGNSNAKGEYYLTDLVEIARSLGGRAIAVDAPEVEMTGCNNRAELAFIERLWQERRRHELMLSGVTMIAPETVFLAYDTVIGQDALIEPNVVFGPRVVIDSGAVIHAFSHIEGAHVSGTATVGPFARLRPGADLADGSKVGNFCEVKNGKIGKGAKVNHLSYIGDATIGAGSNIGAGTITCNYDGVNKHETHIGANSFIGSNSSLVAPVRIGDNAYVASGSVITEDVPADALAFGRARQEVKLGRAKVIRERALAIKAAKKGSH.

The tract at residues 1–231 is pyrophosphorylase; that stretch reads MERTCLAIIL…EVEMTGCNNR (231 aa). UDP-N-acetyl-alpha-D-glucosamine contacts are provided by residues 10-13, lysine 24, glutamine 77, 82-83, 105-107, glycine 143, glutamate 157, asparagine 172, and asparagine 229; these read LAAG, GT, and YGD. Residue aspartate 107 coordinates Mg(2+). Residue asparagine 229 coordinates Mg(2+). Positions 232-252 are linker; sequence AELAFIERLWQERRRHELMLS. The segment at 253–453 is N-acetyltransferase; that stretch reads GVTMIAPETV…AIKAAKKGSH (201 aa). Residues arginine 318 and lysine 336 each coordinate UDP-N-acetyl-alpha-D-glucosamine. Residue histidine 348 is the Proton acceptor of the active site. Tyrosine 351 and asparagine 362 together coordinate UDP-N-acetyl-alpha-D-glucosamine. Residues alanine 365, 371–372, serine 390, serine 408, and arginine 425 contribute to the acetyl-CoA site; that span reads NY.

The protein in the N-terminal section; belongs to the N-acetylglucosamine-1-phosphate uridyltransferase family. It in the C-terminal section; belongs to the transferase hexapeptide repeat family. Homotrimer. Mg(2+) is required as a cofactor.

It is found in the cytoplasm. It catalyses the reaction alpha-D-glucosamine 1-phosphate + acetyl-CoA = N-acetyl-alpha-D-glucosamine 1-phosphate + CoA + H(+). The catalysed reaction is N-acetyl-alpha-D-glucosamine 1-phosphate + UTP + H(+) = UDP-N-acetyl-alpha-D-glucosamine + diphosphate. Its pathway is nucleotide-sugar biosynthesis; UDP-N-acetyl-alpha-D-glucosamine biosynthesis; N-acetyl-alpha-D-glucosamine 1-phosphate from alpha-D-glucosamine 6-phosphate (route II): step 2/2. It participates in nucleotide-sugar biosynthesis; UDP-N-acetyl-alpha-D-glucosamine biosynthesis; UDP-N-acetyl-alpha-D-glucosamine from N-acetyl-alpha-D-glucosamine 1-phosphate: step 1/1. The protein operates within bacterial outer membrane biogenesis; LPS lipid A biosynthesis. In terms of biological role, catalyzes the last two sequential reactions in the de novo biosynthetic pathway for UDP-N-acetylglucosamine (UDP-GlcNAc). The C-terminal domain catalyzes the transfer of acetyl group from acetyl coenzyme A to glucosamine-1-phosphate (GlcN-1-P) to produce N-acetylglucosamine-1-phosphate (GlcNAc-1-P), which is converted into UDP-GlcNAc by the transfer of uridine 5-monophosphate (from uridine 5-triphosphate), a reaction catalyzed by the N-terminal domain. This Rhizobium rhizogenes (strain K84 / ATCC BAA-868) (Agrobacterium radiobacter) protein is Bifunctional protein GlmU.